The following is a 359-amino-acid chain: Proton-gated ion channel (359 aa).

The N-terminal stretch at 1 to 43 is a signal peptide; it reads MFPTGWRPKLSESIAASRMLWQPMAAVAVVQIGLLWFSPPVWG. At 44-235 the chain is on the periplasmic side; that stretch reads QDMVSPPPPI…LDYQLRISRQ (192 aa). A helical transmembrane segment spans residues 236–258; it reads YFSYIPNIILPMLFILFISWTAF. The Cytoplasmic portion of the chain corresponds to 259 to 261; sequence WST. Residues 262–286 form a helical membrane-spanning segment; that stretch reads SYEANVTLVVSTLIAHIAFNILVET. At 287-294 the chain is on the periplasmic side; sequence NLPKTPYM. A helical membrane pass occupies residues 295 to 323; sequence TYTGAIIFMIYLFYFVAVIEVTVQHYLKV. Over 324 to 326 the chain is Cytoplasmic; sequence ESQ. Residues 327 to 359 form a helical membrane-spanning segment; it reads PARAASITRASRIAFPVVFLLANIILAFLFFGF.

The protein belongs to the ligand-gated ion channel (TC 1.A.9) family. As to quaternary structure, homopentamer.

It localises to the cell inner membrane. With respect to regulation, tetraethylammonium (TEA) and tetrabutylammonium (TBA) inhibit the proton-activated currents in a dose- and voltage-dependent manner in vitro, whereas the blocker of acid sensing ion channels, amiloride, has no effect. Channel current of GLIC can be inhibited by inhaled and intravenous general anesthetics at and below concentrations used clinically. Ion conduction is also inhibited by lidocaine and by divalent transition metal ions such as cadmium ions. Functionally, cationic channel with similar permeabilities for Na(+) and K(+), that is activated by an increase of the proton concentration on the extracellular side. Displays no permeability for chloride ions. Shows slow kinetics of activation, no desensitization and a single channel conductance of 8 pS. Might contribute to adaptation to external pH change. This Gloeobacter violaceus (strain ATCC 29082 / PCC 7421) protein is Proton-gated ion channel (glvI).